The chain runs to 97 residues: Large ribosomal subunit protein uL23 (97 aa).

The protein belongs to the universal ribosomal protein uL23 family. As to quaternary structure, part of the 50S ribosomal subunit. Contacts protein L29, and trigger factor when it is bound to the ribosome.

Its function is as follows. One of the early assembly proteins it binds 23S rRNA. One of the proteins that surrounds the polypeptide exit tunnel on the outside of the ribosome. Forms the main docking site for trigger factor binding to the ribosome. The chain is Large ribosomal subunit protein uL23 from Pelagibacter ubique (strain HTCC1062).